Consider the following 146-residue polypeptide: SMR1 protein (146 aa).

The N-terminal stretch at 1–22 is a signal peptide; the sequence is MKSLYLIFGLWILLACFQSGEG. 2 disordered regions span residues 23–43 and 99–146; these read VRGPRRQHNPRRQQDPSTLPH and TAPD…GGGK. Residues 109 to 139 are compositionally biased toward polar residues; that stretch reads PPTQLHSTEQANTKTDAKISNTTATTQNSTD. N-linked (GlcNAc...) asparagine glycosylation is found at Asn129 and Asn136.

In terms of processing, several O-linked glycosylation sites might be present in the C-terminal part. Expressed predominantly in the acinar cells of the submandibular gland and to lesser extent in the prostate.

It is found in the secreted. Its function is as follows. Sialorphin may be involved in the modulation of mineral balance between at least four systems: kidney, bone, tooth and circulation. Functionally, submandibular gland peptide T is able to directly or indirectly down-regulate cardiovascular depression induced by septic shock (endotoxin stimuli), or anaphylactic challenge (nematode antigen sensitization). Sialorphin is an endogenous inhibitor of neprilysin. Inhibits the breakdown of Met-enkephalin and substance P in isolated tissue from the dorsal zone of the rat spinal cord. Has an analgesic effect when administered to rats by intravenous injection. This is SMR1 protein (Vcsa1) from Rattus norvegicus (Rat).